Reading from the N-terminus, the 676-residue chain is Hypermethylated in cancer 1 protein (676 aa).

Residues Ala1–Ala27 form a disordered region. The segment covering Ala8–Glu23 has biased composition (basic and acidic residues). A BTB domain is found at Cys63 to Glu126. The binding to CtBP stretch occupies residues Gly241–Ser245. Disordered regions lie at residues Pro264 to Gly326 and Gly342 to Cys405. Basic and acidic residues-rich tracts occupy residues Glu266–Ser278 and Glu351–Glu361. Over residues Ser384–Gly398 the composition is skewed to low complexity. 5 consecutive C2H2-type zinc fingers follow at residues Tyr420–Leu447, Tyr474–Pro501, Tyr502–Pro529, Phe530–Pro557, and Tyr558–Asp585.

Belongs to the krueppel C2H2-type zinc-finger protein family. Hic subfamily. In terms of assembly, interacts with CtBP. Isoform 1 is highly expressed in kidney and lung. Expression of isoform 2 is higher in the lens, retina and stomach, and extremely low in heart, muscle, kidney and lung. Isoform 3 is weakly expressed in heart, kidney and lens.

It localises to the nucleus. Its function is as follows. Binds specifically to the gamma F-1-binding motif of the gamma F-crystallin promoter. May have a regulatory role in sclerotome specification and/or differentiation. Isoform 2 functions as a transcriptional repressor in lens cells. The chain is Hypermethylated in cancer 1 protein (HIC1) from Gallus gallus (Chicken).